The following is a 297-amino-acid chain: UBX domain-containing protein 1 (297 aa).

At A2 the chain carries N-acetylalanine. The UBA domain maps to 2 to 42 (AELTALESLIEMGFPKGRAEKALALTGNQGIEAAMDWLMEH). The tract at residues 40 to 210 (MEHEDDPDVD…PSREPPTKRE (171 aa)) is disordered. Residues 43–297 (EDDPDVDEPL…VLIVAKKCPG (255 aa)) are interaction with BRCA1. Composition is skewed to basic and acidic residues over residues 86-122 (LTEE…ERER) and 137-177 (RLQE…ERAK). Residues 86–176 (LTEEERQEQT…KIERDKAERA (91 aa)) are a coiled coil. The segment covering 187–199 (PSPPATEPGPVPS) has biased composition (pro residues). The residue at position 199 (S199) is a Phosphoserine. S200 carries the phosphoserine; by MAPK12 modification. Residues T207 and T229 each carry the phosphothreonine modification. Positions 209–291 (REYDQCRIQV…GLVPSAVLIV (83 aa)) constitute a UBX domain. Phosphoserine is present on S270.

Component of a complex required to couple retrotranslocation, ubiquitination and deglycosylation composed of NGLY1, SAKS1, AMFR, VCP and RAD23B. Interacts with HOMER2. Interacts directly with VCP. Interacts with BRCA1 and BARD1; interaction takes place when BRCA1 is not autoubiquitinated bur is strongly enhanced in the presence of autoubiquitinated BRCA1.

The protein localises to the cytoplasm. Ubiquitin-binding protein that interacts with the BRCA1-BARD1 heterodimer, and regulates its activity. Specifically binds 'Lys-6'-linked polyubiquitin chains. Interaction with autoubiquitinated BRCA1, leads to inhibit the E3 ubiquitin-protein ligase activity of the BRCA1-BARD1 heterodimer. Component of a complex required to couple deglycosylation and proteasome-mediated degradation of misfolded proteins in the endoplasmic reticulum that are retrotranslocated in the cytosol. The sequence is that of UBX domain-containing protein 1 (UBXN1) from Bos taurus (Bovine).